A 275-amino-acid chain; its full sequence is Ribosomal RNA small subunit methyltransferase A (275 aa).

Residues Asn-19, Leu-21, Gly-46, Glu-71, Asp-94, and Asn-117 each coordinate S-adenosyl-L-methionine.

Belongs to the class I-like SAM-binding methyltransferase superfamily. rRNA adenine N(6)-methyltransferase family. RsmA subfamily.

The protein resides in the cytoplasm. It carries out the reaction adenosine(1518)/adenosine(1519) in 16S rRNA + 4 S-adenosyl-L-methionine = N(6)-dimethyladenosine(1518)/N(6)-dimethyladenosine(1519) in 16S rRNA + 4 S-adenosyl-L-homocysteine + 4 H(+). Functionally, specifically dimethylates two adjacent adenosines (A1518 and A1519) in the loop of a conserved hairpin near the 3'-end of 16S rRNA in the 30S particle. May play a critical role in biogenesis of 30S subunits. This chain is Ribosomal RNA small subunit methyltransferase A, found in Burkholderia lata (strain ATCC 17760 / DSM 23089 / LMG 22485 / NCIMB 9086 / R18194 / 383).